A 575-amino-acid polypeptide reads, in one-letter code: Thrombomodulin (575 aa).

The N-terminal stretch at 1–18 is a signal peptide; that stretch reads MLGVLVLGALALAGLGFP. The Extracellular portion of the chain corresponds to 19–515; it reads APAEPQPGGS…TPPAVGLVHS (497 aa). In terms of domain architecture, C-type lectin spans 31–169; sequence VEHDCFALYP…VKADGFLCEF (139 aa). N47, N115, and N116 each carry an N-linked (GlcNAc...) asparagine glycan. Intrachain disulfides connect C137-C158, C245-C256, C252-C265, C267-C280, C288-C296, C292-C308, C310-C323, C329-C340, C336-C349, C351-C362, C369-C378, C374-C388, C390-C404, C408-C413, C417-C425, C427-C439, C445-C455, C451-C464, and C466-C480. EGF-like domains lie at 241-281 and 284-324; these read GAWD…RSCT and ATQS…HRCE. Residues 325 to 363 form the EGF-like 3; calcium-binding domain; that stretch reads DVDDCILEPSPCPQRCVNTQGGFECHCYPNYDLVDGECV. A (3R)-3-hydroxyasparagine modification is found at N342. EGF-like domains lie at 365 to 405 and 404 to 440; these read PVDP…HRCQ and CQMF…FICT. A glycan (N-linked (GlcNAc...) asparagine) is linked at N382. N409 carries N-linked (GlcNAc...) asparagine glycosylation. The region spanning 441 to 481 is the EGF-like 6; calcium-binding domain; the sequence is DIDECENGGFCSGVCHNLPGTFECICGPDSALARHIGTDCD. The segment at 481-515 is involved in alpha-L/beta-2 and alpha-M/beta-2 integrin binding; sequence DSGKVDGGDSGSGEPPPSPTPGSTLTPPAVGLVHS. A disordered region spans residues 484–506; that stretch reads KVDGGDSGSGEPPPSPTPGSTLT. 2 O-linked (Xyl...) (chondroitin sulfate) serine glycosylation sites follow: S490 and S492. Residues 516–539 traverse the membrane as a helical segment; it reads GLLIGISIASLCLVVALLALLCHL. The Cytoplasmic portion of the chain corresponds to 540 to 575; the sequence is RKKQGAARAKMEYKCAAPSKEVVLQHVRTERTPQRL.

In terms of assembly, interacts with ITGAL, ITGAM and ITGB2. Interacts with thrombin/F2; this interaction switches the specificity of thrombin from a procoagulant to an anticoagulant and antifibrinolytic protease. Interacts with ANGP1 and ANGP2; these interactions significantly inhibit the generation of activated PC and TAFIa/CPB2 by the thrombin/thrombomodulin complex. Interacts with PF4; this interaction enhances generation of activated protein C. Interacts with HMGB1; this interaction inhibits HMGB1 inflammatory activity. N-glycosylated. In terms of processing, the iron and 2-oxoglutarate dependent 3-hydroxylation of aspartate and asparagine is (R) stereospecific within EGF domains. As to expression, endothelial cells are unique in synthesizing thrombomodulin.

Its subcellular location is the membrane. Functionally, endothelial cell receptor that plays a critical role in regulating several physiological processes including hemostasis, coagulation, fibrinolysis, inflammation, and angiogenesis. Acts as a cofactor for thrombin activation of protein C/PROC on the surface of vascular endothelial cells leading to initiation of the activated protein C anticoagulant pathway. Also accelerates the activation of the plasma carboxypeptidase B2/CPB2, which catalyzes removal of C-terminal basic amino acids from its substrates including kinins or anaphylatoxins leading to fibrinolysis inhibition. Plays critical protective roles in changing the cleavage specificity of protease-activated receptor 1/PAR1, inhibiting endothelial cell permeability and inflammation. Suppresses inflammation distinctly from its anticoagulant cofactor activity by sequestering HMGB1 thereby preventing it from engaging cellular receptors such as RAGE and contributing to the inflammatory response. The protein is Thrombomodulin (THBD) of Homo sapiens (Human).